A 694-amino-acid polypeptide reads, in one-letter code: Elongation factor G (694 aa).

Residues 8–287 enclose the tr-type G domain; that stretch reads EDYRNFGIMA…AVVEFLPAPT (280 aa). Residues 17–24, 86–90, and 140–143 each bind GTP; these read AHIDAGKT, DTPGH, and NKMD.

This sequence belongs to the TRAFAC class translation factor GTPase superfamily. Classic translation factor GTPase family. EF-G/EF-2 subfamily.

It is found in the cytoplasm. Its function is as follows. Catalyzes the GTP-dependent ribosomal translocation step during translation elongation. During this step, the ribosome changes from the pre-translocational (PRE) to the post-translocational (POST) state as the newly formed A-site-bound peptidyl-tRNA and P-site-bound deacylated tRNA move to the P and E sites, respectively. Catalyzes the coordinated movement of the two tRNA molecules, the mRNA and conformational changes in the ribosome. This chain is Elongation factor G, found in Brucella suis (strain ATCC 23445 / NCTC 10510).